The sequence spans 349 residues: S-adenosylmethionine:tRNA ribosyltransferase-isomerase (349 aa).

Belongs to the QueA family. As to quaternary structure, monomer.

It is found in the cytoplasm. It catalyses the reaction 7-aminomethyl-7-carbaguanosine(34) in tRNA + S-adenosyl-L-methionine = epoxyqueuosine(34) in tRNA + adenine + L-methionine + 2 H(+). It participates in tRNA modification; tRNA-queuosine biosynthesis. Transfers and isomerizes the ribose moiety from AdoMet to the 7-aminomethyl group of 7-deazaguanine (preQ1-tRNA) to give epoxyqueuosine (oQ-tRNA). This is S-adenosylmethionine:tRNA ribosyltransferase-isomerase from Pseudomonas putida (strain W619).